We begin with the raw amino-acid sequence, 302 residues long: MLGKARELANYQDEPEQLPTGSFGKNAFLRLGFERRPERTVLATLHRRAPLIVQQALYWDEGMPTLPCVSIISNAGGILQGDRYAIEIDLEPDTQAHVTTQSATRIQEMDANFATQTQTITLGANSYLEYIPHPIIPHKHSRFVQQTEVTIHPTATLIYSEVLMAGRKYYGTGELFHYDLFSSKFHAAHTDGTSLFTEKFIVEPARGNVSRLGAMGSFHVFGNLILLTPKTHADRLFETIDPVFDMDEGIAWGASRLPNDAGLLFKVLGMESAPVRAAIRKIWEAARQEVTSASLPENFLWA.

Belongs to the UreD family. UreD, UreF and UreG form a complex that acts as a GTP-hydrolysis-dependent molecular chaperone, activating the urease apoprotein by helping to assemble the nickel containing metallocenter of UreC. The UreE protein probably delivers the nickel.

Its subcellular location is the cytoplasm. In terms of biological role, required for maturation of urease via the functional incorporation of the urease nickel metallocenter. The chain is Urease accessory protein UreD 2 from Brucella canis (strain ATCC 23365 / NCTC 10854 / RM-666).